The sequence spans 265 residues: MKNSKVIKLQDRVPKLKNQQKKKKKNVNHRLILYISILFLLVLFLIYFRSPLSNIKKISVFGNHYMTDEQVMKESGVTYDTSYFRVTAHKAEENLTKRKEIKAVNVKKRFPNKIDVHIEEYLTIGYINKDGKLQPLLENGKTLDVLPNGKLPVAAPIFEPFKEEKMKELIAELEKLTPTILRSISEIRYSPTNANEDHLTLYMNEGYEVSTTIQNFAKRMETYPLILKTIEPGKKVLIDLEVGAYTKELGAEEKKNRMIVFNTLS.

The Cytoplasmic portion of the chain corresponds to Met1 to Arg30. A helical membrane pass occupies residues Leu31 to Pro51. The Extracellular segment spans residues Leu52–Ser265. The 69-residue stretch at Ser53 to Tyr121 folds into the POTRA domain.

This sequence belongs to the FtsQ/DivIB family. DivIB subfamily.

The protein resides in the cell membrane. Functionally, cell division protein that may be involved in stabilizing or promoting the assembly of the division complex. In Bacillus anthracis, this protein is Cell division protein DivIB.